Reading from the N-terminus, the 149-residue chain is Large ribosomal subunit protein uL15 (149 aa).

Residues 1–52 (MSELLKLHHLRPAPGSNKAKIRKGRGEASKGKTAGRGTKGTKARSTVPAGFE) form a disordered region.

It belongs to the universal ribosomal protein uL15 family. As to quaternary structure, part of the 50S ribosomal subunit.

Functionally, binds to the 23S rRNA. The sequence is that of Large ribosomal subunit protein uL15 from Thermobifida fusca (strain YX).